A 539-amino-acid polypeptide reads, in one-letter code: Chaperone Ric-8A (539 aa).

Residues 506-539 are disordered; sequence PMGVTSDGRLGPLDEAAQKMLQRQESSDLDSDSD.

The protein belongs to the synembryn family.

The protein resides in the cytoplasm. It is found in the cell cortex. Its function is as follows. Chaperone that specifically binds and folds nascent G alpha proteins prior to G protein heterotrimer formation, promoting their stability and activity: folds GNAI1, GNAO1, GNA13 and GNAQ. Does not fold G(s) G-alpha proteins GNAS nor GNAL. Also acts as a guanine nucleotide exchange factor (GEF) for G alpha proteins by stimulating exchange of bound GDP for free GTP. The protein is Chaperone Ric-8A (ric8a) of Xenopus laevis (African clawed frog).